The sequence spans 321 residues: Ubiquitin carboxyl-terminal hydrolase ubh-4 (321 aa).

Residues 6 to 220 form the UCH catalytic domain; it reads SWCLIESDPG…ITFNLMALVP (215 aa). The active-site Nucleophile is the Cys83. His158 functions as the Proton donor in the catalytic mechanism. The ULD domain maps to 273-301; the sequence is NYTPFVIELMKILAKEGKLVGLVDNAYQA.

It belongs to the peptidase C12 family. As to quaternary structure, interacts with proteasome 19S subunit rpn-13. As to expression, highly expressed in intestine and to a lesser extent in other tissues including muscles and neurons.

It carries out the reaction Thiol-dependent hydrolysis of ester, thioester, amide, peptide and isopeptide bonds formed by the C-terminal Gly of ubiquitin (a 76-residue protein attached to proteins as an intracellular targeting signal).. Functionally, ubiquitin-protein hydrolase involved both in the processing of ubiquitin precursors and of ubiquitinated proteins. This enzyme is a thiol protease that recognizes and hydrolyzes a peptide bond at the C-terminal glycine of ubiquitin. In Caenorhabditis elegans, this protein is Ubiquitin carboxyl-terminal hydrolase ubh-4.